The primary structure comprises 630 residues: MDLTQIQNPSFLKDMSISELEGLSEDIRKFLIEELSQTGGHIAPNLGVVELTIALHKLFDSPQDKFLWDVGHQSYVHKILTGRAKEFGTLRQYQGLCGFPKRCESEHDVWETGHSSTSLSAAMGMALARDLKKTKEYVIPIIGDGALTGGMALEALNHIGHEKTDMIVILNDNEMSIAPNVGALHNVLGRLRTAGKYHWVKDELEYILKKIPAVGGKVAATAEKIKDSLKYLLVSGVFFEELGFTYLGPVDGHDYEKLFETLQYAKKTKGPVLVHVITKKGKGYKPAESDVIGTWHGTGPYKIESGDFVKPKEVAPAWSAVVSETVLKLARADERIVAITPAMPVGSKLEKFQKEFPNRMIDVGIAEQHATTMAAGMATQGMKPFLAIYSTFLQRAYDQVVHDICRQNLNVFIGIDRSGLVGADGETHQGVFDISFLRHLPNMVLMMPKDENEGQHLVYTAMQYEDGPIALRYARGNGLGVHMDEELKAIPIGTWETLKEGTQAAILTFGTTIPMAMEAAERLEKAGVSVKVVNARFIKPMDEAYLHDLLGKNIPILTIEEACLIGGFGTGVVEFASENGYHSALVERMGIPDRFIEHGSVTKLLEEIGLTTDAVVDRIHTMIPSKQKRA.

Thiamine diphosphate contacts are provided by residues histidine 72 and 113 to 115 (GHS). Aspartate 144 contacts Mg(2+). Residues 145 to 146 (GA), asparagine 173, tyrosine 284, and glutamate 367 each bind thiamine diphosphate. Position 173 (asparagine 173) interacts with Mg(2+).

The protein belongs to the transketolase family. DXPS subfamily. In terms of assembly, homodimer. Mg(2+) is required as a cofactor. Requires thiamine diphosphate as cofactor.

It catalyses the reaction D-glyceraldehyde 3-phosphate + pyruvate + H(+) = 1-deoxy-D-xylulose 5-phosphate + CO2. It functions in the pathway metabolic intermediate biosynthesis; 1-deoxy-D-xylulose 5-phosphate biosynthesis; 1-deoxy-D-xylulose 5-phosphate from D-glyceraldehyde 3-phosphate and pyruvate: step 1/1. Catalyzes the acyloin condensation reaction between C atoms 2 and 3 of pyruvate and glyceraldehyde 3-phosphate to yield 1-deoxy-D-xylulose-5-phosphate (DXP). The protein is 1-deoxy-D-xylulose-5-phosphate synthase of Bacillus cereus (strain G9842).